A 104-amino-acid chain; its full sequence is Flagellar hook-basal body complex protein FliE (104 aa).

Belongs to the FliE family.

The protein localises to the bacterial flagellum basal body. In Salmonella heidelberg (strain SL476), this protein is Flagellar hook-basal body complex protein FliE.